A 91-amino-acid chain; its full sequence is Large ribosomal subunit protein uL23 (91 aa).

Belongs to the universal ribosomal protein uL23 family. In terms of assembly, part of the 50S ribosomal subunit. Contacts protein L29, and trigger factor when it is bound to the ribosome.

Functionally, one of the early assembly proteins it binds 23S rRNA. One of the proteins that surrounds the polypeptide exit tunnel on the outside of the ribosome. Forms the main docking site for trigger factor binding to the ribosome. In Macrococcus caseolyticus (strain JCSC5402) (Macrococcoides caseolyticum), this protein is Large ribosomal subunit protein uL23.